Reading from the N-terminus, the 611-residue chain is TANK-binding kinase 1-binding protein 1 (611 aa).

Residues 1 to 280 form a homodimerization region; the sequence is MESMFEDDIS…QDLASNQSEC (280 aa). Residues 48 to 162 adopt a coiled-coil conformation; the sequence is YGDIKERLGG…ALVETHLRQI (115 aa). Phosphoserine is present on serine 184. Residues 218–277 adopt a coiled-coil conformation; it reads TSVSVSELERRRLEEALEAAQGEARGAQLREEQLQAECERLQGELKQLQETRAQDLASNQ. The interaction with TBK1 and IKBKE stretch occupies residues 281–330; sequence DMAWVKRVGDDQVNLALAYTELTEELGRLRELSSLQGRILRTLLQEQARN. The interval 328 to 437 is disordered; sequence ARNAGQRHSP…PPPPPGERTL (110 aa). Pro residues predominate over residues 346-361; sequence PACPSPSPPARPPPCA. Over residues 362–372 the composition is skewed to low complexity; sequence PCQSPAAQRRS. Residues serine 365, serine 372, serine 379, serine 385, serine 400, and serine 415 each carry the phosphoserine modification. Residues 389 to 406 are compositionally biased toward pro residues; that stretch reads PSCPSPVPQRRSPVPPSC. Pro residues predominate over residues 416–433; the sequence is PVPPSCPAPQPRPPPPPG. Residues serine 500 and serine 530 each carry the phosphoserine modification. The segment at 579-605 adopts a UBZ1-type zinc-finger fold; sequence IRSCPLCQLGFPVGYPDDALIKHIDSH. Zn(2+) is bound by residues cysteine 582, cysteine 585, histidine 601, and histidine 605.

Homodimer. May form a heterodimer with NAP1. Interacts with TKB1 and IKBKE. Weakly interacts with DDX3X.

Its function is as follows. Adapter protein which constitutively binds TBK1 and IKBKE playing a role in antiviral innate immunity. Essential for the efficient induction of IRF-dependent transcription following infection with Sendai virus. The chain is TANK-binding kinase 1-binding protein 1 from Mus musculus (Mouse).